The chain runs to 174 residues: ATP-dependent protease subunit HslV (174 aa).

The active site involves Thr2. Na(+) contacts are provided by Gly157, Cys160, and Thr163.

Belongs to the peptidase T1B family. HslV subfamily. A double ring-shaped homohexamer of HslV is capped on each side by a ring-shaped HslU homohexamer. The assembly of the HslU/HslV complex is dependent on binding of ATP.

It localises to the cytoplasm. It carries out the reaction ATP-dependent cleavage of peptide bonds with broad specificity.. Its activity is regulated as follows. Allosterically activated by HslU binding. In terms of biological role, protease subunit of a proteasome-like degradation complex believed to be a general protein degrading machinery. In Shewanella loihica (strain ATCC BAA-1088 / PV-4), this protein is ATP-dependent protease subunit HslV.